The primary structure comprises 358 residues: 3-dehydroquinate synthase (358 aa).

Residues 70-75, 104-108, 128-129, lysine 141, lysine 150, and 168-171 each bind NAD(+); these read DGEQYK, GVIGD, TT, and CLST. Zn(2+)-binding residues include glutamate 183, histidine 246, and histidine 263.

Belongs to the sugar phosphate cyclases superfamily. Dehydroquinate synthase family. Co(2+) serves as cofactor. Zn(2+) is required as a cofactor. The cofactor is NAD(+).

Its subcellular location is the cytoplasm. The enzyme catalyses 7-phospho-2-dehydro-3-deoxy-D-arabino-heptonate = 3-dehydroquinate + phosphate. It functions in the pathway metabolic intermediate biosynthesis; chorismate biosynthesis; chorismate from D-erythrose 4-phosphate and phosphoenolpyruvate: step 2/7. Its function is as follows. Catalyzes the conversion of 3-deoxy-D-arabino-heptulosonate 7-phosphate (DAHP) to dehydroquinate (DHQ). In Shewanella woodyi (strain ATCC 51908 / MS32), this protein is 3-dehydroquinate synthase.